The following is a 214-amino-acid chain: Pyridoxine/pyridoxamine 5'-phosphate oxidase (214 aa).

Residues 10–13 and lysine 68 each bind substrate; that span reads RLNY. FMN contacts are provided by residues 63–68, 78–79, lysine 85, and glutamine 107; these read RMVLLK and YT. 3 residues coordinate substrate: tyrosine 125, arginine 129, and serine 133. FMN is bound by residues 142–143 and tryptophan 187; that span reads QS. 193–195 provides a ligand contact to substrate; sequence RLH. Residue arginine 197 participates in FMN binding.

Belongs to the pyridoxamine 5'-phosphate oxidase family. As to quaternary structure, homodimer. The cofactor is FMN.

It catalyses the reaction pyridoxamine 5'-phosphate + O2 + H2O = pyridoxal 5'-phosphate + H2O2 + NH4(+). It carries out the reaction pyridoxine 5'-phosphate + O2 = pyridoxal 5'-phosphate + H2O2. The protein operates within cofactor metabolism; pyridoxal 5'-phosphate salvage; pyridoxal 5'-phosphate from pyridoxamine 5'-phosphate: step 1/1. It participates in cofactor metabolism; pyridoxal 5'-phosphate salvage; pyridoxal 5'-phosphate from pyridoxine 5'-phosphate: step 1/1. Catalyzes the oxidation of either pyridoxine 5'-phosphate (PNP) or pyridoxamine 5'-phosphate (PMP) into pyridoxal 5'-phosphate (PLP). The polypeptide is Pyridoxine/pyridoxamine 5'-phosphate oxidase (Synechocystis sp. (strain ATCC 27184 / PCC 6803 / Kazusa)).